Consider the following 371-residue polypeptide: MSKRDYYEVLGLSKGASKDEIKKAYRRLAKKYHPDVSKEENAIEKFKEVQEAYEVLSDDQKRAQYDQFGHAGANQGFGGFGGGGDFGGGFGFEDIFSSFFGGGGGRRRDPNAPRQGADLQYQVTLDFEEAIFGKELNVEIPVEDPCDTCKGSGAKPGTSKETCKHCSGSGQVSVEQNTPFGRIVNRQACSHCSGTGQMIKEKCTTCHGSGKVRKRKKINVKIPAGIDNGQQIRVSGKGEAGVNGGPAGDLYVVVHVRSHEFFEREGDHIICEMPLTFAQMALGAEVEVPTVHGKVKLKIPAGTQTGTEFRLKGKGAPNVRGYGQGDQYVVVRVVVPTKLTSHQKDLLREFAGQEEQDDSLFGKLKRAFKGE.

The J domain occupies 5–69 (DYYEVLGLSK…QKRAQYDQFG (65 aa)). Residues 133–215 (GKELNVEIPV…CHGSGKVRKR (83 aa)) form a CR-type zinc finger. Zn(2+) is bound by residues Cys146, Cys149, Cys163, Cys166, Cys189, Cys192, Cys203, and Cys206. CXXCXGXG motif repeat units lie at residues 146-153 (CDTCKGSG), 163-170 (CKHCSGSG), 189-196 (CSHCSGTG), and 203-210 (CTTCHGSG).

This sequence belongs to the DnaJ family. In terms of assembly, homodimer. Zn(2+) is required as a cofactor.

The protein resides in the cytoplasm. In terms of biological role, participates actively in the response to hyperosmotic and heat shock by preventing the aggregation of stress-denatured proteins and by disaggregating proteins, also in an autonomous, DnaK-independent fashion. Unfolded proteins bind initially to DnaJ; upon interaction with the DnaJ-bound protein, DnaK hydrolyzes its bound ATP, resulting in the formation of a stable complex. GrpE releases ADP from DnaK; ATP binding to DnaK triggers the release of the substrate protein, thus completing the reaction cycle. Several rounds of ATP-dependent interactions between DnaJ, DnaK and GrpE are required for fully efficient folding. Also involved, together with DnaK and GrpE, in the DNA replication of plasmids through activation of initiation proteins. This Bacillus cereus (strain 03BB102) protein is Chaperone protein DnaJ.